A 456-amino-acid polypeptide reads, in one-letter code: F-box/FBD/LRR-repeat protein At3g52680 (456 aa).

An F-box domain is found at 20 to 73 (KDRISELPDGLLLKILSSLPTNIVVATSVLSKQWRSLWKLVPNLEFDSDDYESE). LRR repeat units follow at residues 74–100 (HYTF…RLKF), 102–127 (NFNP…VLDF), 152–179 (TLKL…HLEF), 180–205 (VRYK…RLYR), 225–252 (TIHD…LIEE), 270–295 (IAEV…LLNL), and 318–344 (TREA…KLTD). Positions 358–409 (KWNEPKDVPECLLSQLETFVWRRFDWGREEEKEIATYILKNGRRLKKATFST) constitute an FBD domain.

The polypeptide is F-box/FBD/LRR-repeat protein At3g52680 (Arabidopsis thaliana (Mouse-ear cress)).